A 144-amino-acid polypeptide reads, in one-letter code: Large ribosomal subunit protein uL15 (144 aa).

A compositionally biased stretch (basic and acidic residues) spans 1-13; it reads MKLNELKPAEGSR. Positions 1 to 47 are disordered; it reads MKLNELKPAEGSRKVRNRVGRGDSSGNGKTAGRGQKGQKARSKTRLG. A compositionally biased stretch (gly residues) spans 23–35; that stretch reads DSSGNGKTAGRGQ.

Belongs to the universal ribosomal protein uL15 family. Part of the 50S ribosomal subunit.

Binds to the 23S rRNA. This is Large ribosomal subunit protein uL15 from Levilactobacillus brevis (strain ATCC 367 / BCRC 12310 / CIP 105137 / JCM 1170 / LMG 11437 / NCIMB 947 / NCTC 947) (Lactobacillus brevis).